The sequence spans 427 residues: Inward rectifier potassium channel 2 (427 aa).

Topologically, residues 1 to 81 (MGSVRTNRYS…IFTTCVDIRW (81 aa)) are cytoplasmic. S-nitrosocysteine is present on C76. The chain crosses the membrane as a helical span at residues 82-106 (RWMLVIFCLAFVLSWLFFGCVFWLI). Topologically, residues 107–128 (ALLHGDLDASKESKACVSEVNS) are extracellular. The helical; Pore-forming intramembrane region spans 129–140 (FTAAFLFSIETQ). The pore-forming intramembrane region spans 141-147 (TTIGYGF). The Selectivity filter motif lies at 142–147 (TIGYGF). Topologically, residues 148–156 (RCVTDECPV) are extracellular. The chain crosses the membrane as a helical span at residues 157–178 (AVFMVVFQSIVGCIIDAFIIGA). Topologically, residues 179-427 (VMAKMAKPKK…PRPLRRESEI (249 aa)) are cytoplasmic. A polyphosphoinositide (PIP2)-binding region spans residues 181–208 (AKMAKPKKRNETLVFSHNAVIAMRDGKL). Residues 384-427 (SKEEDDSENGVPESTSTDTPPDLDLHNQASVPLEPRPLRRESEI) form a disordered region. Positions 425–427 (SEI) match the PDZ-binding motif.

This sequence belongs to the inward rectifier-type potassium channel (TC 1.A.2.1) family. KCNJ2 subfamily. Homotetramer. Homomultimeric and heteromultimeric association with KCNJ4/Kir2.3. Can form heteromeric channels with Kir2.6/KCNJ18. Associates, via its PDZ-recognition domain, with a complex containing LIN7A, LIN7B, LIN7C, DLG1, CASK and APBA1. In terms of processing, S-nitrosylation increases the open probability and inward rectifying currents.

It is found in the cell membrane. The protein resides in the sarcolemma. The protein localises to the T-tubule. It carries out the reaction K(+)(in) = K(+)(out). Activated by phosphatidylinositol 4,5 biphosphate (PtdIns(4,5)P2). In terms of biological role, inward rectifier potassium channels are characterized by a greater tendency to allow potassium to flow into the cell rather than out of it. Their voltage dependence is regulated by the concentration of extracellular potassium; as external potassium is raised, the voltage range of the channel opening shifts to more positive voltages. The inward rectification is mainly due to the blockage of outward current by internal magnesium. Blocked by external barium or cesium. Probably participates in establishing action potential waveform and excitability of neuronal and muscle tissues. This chain is Inward rectifier potassium channel 2 (KCNJ2), found in Canis lupus familiaris (Dog).